The chain runs to 536 residues: Antagonist of mitotic exit network protein 1 (536 aa).

Disordered stretches follow at residues 27–77 (YSPS…PISL) and 94–123 (SSSESSDLESLPDLSEDRDTPFSSPINRNP). Basic and acidic residues predominate over residues 32-44 (EEPKYLKRSKSES). A compositionally biased stretch (polar residues) spans 45-58 (TTKLSRQLPRTPSN). Residues 94 to 106 (SSSESSDLESLPD) are compositionally biased toward low complexity. The segment covering 114–123 (PFSSPINRNP) has biased composition (polar residues).

Belongs to the AMN1 family.

The protein resides in the cytoplasm. It is found in the nucleus. In terms of biological role, negative regulator of the mitotic exit network (MEN), required for multiple cell cycle checkpoints. Required for daughter cell separation and chromosome stability. Involved in copper sensitivity. The protein is Antagonist of mitotic exit network protein 1 (AMN1) of Debaryomyces hansenii (strain ATCC 36239 / CBS 767 / BCRC 21394 / JCM 1990 / NBRC 0083 / IGC 2968) (Yeast).